The chain runs to 84 residues: Small ribosomal subunit protein bS20 (84 aa).

This sequence belongs to the bacterial ribosomal protein bS20 family.

Binds directly to 16S ribosomal RNA. This Lactiplantibacillus plantarum (strain ATCC BAA-793 / NCIMB 8826 / WCFS1) (Lactobacillus plantarum) protein is Small ribosomal subunit protein bS20.